We begin with the raw amino-acid sequence, 403 residues long: Large ribosomal subunit protein uL3 (403 aa).

The segment at 1 to 37 is disordered; it reads MSHRKFSAPRHGSLGFLPRKRSSRHRGKVKSFPKDDP. Residue serine 13 is modified to Phosphoserine. Positions 18-31 are enriched in basic residues; sequence PRKRSSRHRGKVKS. Lysine 39 is covalently cross-linked (Glycyl lysine isopeptide (Lys-Gly) (interchain with G-Cter in SUMO2)). Lysine 136 is subject to N6-acetyllysine. Glycyl lysine isopeptide (Lys-Gly) (interchain with G-Cter in SUMO2) cross-links involve residues lysine 224 and lysine 226. Histidine 245 carries the post-translational modification Tele-methylhistidine. Lysine 286 and lysine 294 each carry N6-acetyllysine; alternate. A Glycyl lysine isopeptide (Lys-Gly) (interchain with G-Cter in SUMO2); alternate cross-link involves residue lysine 286. Residue lysine 294 forms a Glycyl lysine isopeptide (Lys-Gly) (interchain with G-Cter in SUMO1); alternate linkage. Serine 304 is subject to Phosphoserine. Lysine 366 bears the N6-acetyllysine; alternate mark. Lysine 366 is covalently cross-linked (Glycyl lysine isopeptide (Lys-Gly) (interchain with G-Cter in SUMO2); alternate). Lysine 373 is subject to N6-acetyllysine. Residues lysine 386, lysine 393, and lysine 399 each participate in a glycyl lysine isopeptide (Lys-Gly) (interchain with G-Cter in SUMO2) cross-link.

The protein belongs to the universal ribosomal protein uL3 family. In terms of assembly, component of the large ribosomal subunit. Interacts with DHX33. In terms of processing, constitutively monomethylated at His-245 by METTL18. Methylation at His-245 regulates translation elongation by slowing ribosome traversal on tyrosine codons: slower elongation provides enough time for proper folding of synthesized proteins and prevents cellular aggregation of tyrosine-rich proteins. It is not required for incorporation of RPL3 into ribosomes.

The protein resides in the nucleus. The protein localises to the nucleolus. It is found in the cytoplasm. Component of the large ribosomal subunit. The ribosome is a large ribonucleoprotein complex responsible for the synthesis of proteins in the cell. This is Large ribosomal subunit protein uL3 (RPL3) from Homo sapiens (Human).